A 137-amino-acid chain; its full sequence is Ciliary microtubule inner protein 1 (137 aa).

In terms of tissue distribution, expressed in airway epithelial cells, renal tubular cells, pancreatic acinar cells and epithelial cells of the stomach, duodenum, and gallbladder (at protein level).

It is found in the cell projection. It localises to the cilium. The polypeptide is Ciliary microtubule inner protein 1 (Homo sapiens (Human)).